A 510-amino-acid polypeptide reads, in one-letter code: 2,3-bisphosphoglycerate-independent phosphoglycerate mutase (510 aa).

The Mn(2+) site is built by Asp-13 and Ser-63. The active-site Phosphoserine intermediate is the Ser-63. Substrate contacts are provided by residues His-124, 154–155 (RD), Arg-186, Arg-192, 262–265 (RADR), and Lys-334. Mn(2+)-binding residues include Asp-401, His-405, Asp-442, His-443, and His-461.

This sequence belongs to the BPG-independent phosphoglycerate mutase family. As to quaternary structure, monomer. Mn(2+) is required as a cofactor.

It catalyses the reaction (2R)-2-phosphoglycerate = (2R)-3-phosphoglycerate. Its pathway is carbohydrate degradation; glycolysis; pyruvate from D-glyceraldehyde 3-phosphate: step 3/5. Its function is as follows. Catalyzes the interconversion of 2-phosphoglycerate and 3-phosphoglycerate. The sequence is that of 2,3-bisphosphoglycerate-independent phosphoglycerate mutase from Aliivibrio fischeri (strain ATCC 700601 / ES114) (Vibrio fischeri).